A 98-amino-acid chain; its full sequence is Large ribosomal subunit protein uL23 (98 aa).

Belongs to the universal ribosomal protein uL23 family. In terms of assembly, part of the 50S ribosomal subunit. Contacts protein L29, and trigger factor when it is bound to the ribosome.

In terms of biological role, one of the early assembly proteins it binds 23S rRNA. One of the proteins that surrounds the polypeptide exit tunnel on the outside of the ribosome. Forms the main docking site for trigger factor binding to the ribosome. The sequence is that of Large ribosomal subunit protein uL23 from Chromohalobacter salexigens (strain ATCC BAA-138 / DSM 3043 / CIP 106854 / NCIMB 13768 / 1H11).